A 50-amino-acid chain; its full sequence is VVGGDECDINEHPFLAFLYSHGYFCGLTLINQEWVLTAAHCDRRFMRIYL.

One can recognise a Peptidase S1 domain in the interval 1-50 (VVGGDECDINEHPFLAFLYSHGYFCGLTLINQEWVLTAAHCDRRFMRIYL). C25 and C41 are oxidised to a cystine. Residue H40 is the Charge relay system of the active site.

The protein belongs to the peptidase S1 family. Snake venom subfamily. Monomer. N-glycosylated. In terms of tissue distribution, expressed by the venom gland.

The protein resides in the secreted. Inhibited by serine protease inhibitors PMSF, benzamidine, leupeptin and aprotinin, as well as by copper ions (Cu2+). Not inhibited by metalloprotease inhibitors EDTA, EGTA and 1,10-phenanthroline, as well as by barium (Ba2+) and calcium ion (Ca2+). Its function is as follows. Snake venom serine protease that interferes with the hemostatic system of the prey. It almost completely degrades both Aalpha (FGA) and Bbeta (FGB) chains of fibrinogen. It presents a higher ability to degrade fibrin clots than BpirSP27. It hydrolyzes chromogenic substrates S-2238 (used for testing thrombin activity), S-2222 (factor Xa), S-2266 (glandular kallikrein and factor XIa), and S-2302 (plasma kallikrein, factor XIa and XIIa). It shows a decrease in the clotting time of human plasma in the presence of increasing doses of the enzyme. Its minimum coagulant dose (MCD) is 20 ug. It promotes platelet aggregation with a maximum of aggregation of 20%, regardless of the concentration increase or the presence of calcium. It also shows 40% inhibition of the hemolytic activity promoted by the complement pathways and possess only a minor role in the induction of edema and pain in rat. This chain is Thrombin-like enzyme BpirSP41, found in Bothrops pirajai (Piraja's lancehead).